The primary structure comprises 149 residues: MRLLLLNGPNLNLLGQREPGFYGAMTLKAIEADLLAQAEAEAVQLECFQSNFEGALVDQIHQAIGQVQGILINAGAYTHTSIALRDALLGAAIPYVELHLSNTHAREGFRHHSYLADRAVGVVSGFGALSYRLALEGLLAHLRQPQQVL.

The active-site Proton acceptor is the Tyr22. Asn73, His79, and Asp86 together coordinate substrate. The active-site Proton donor is His99. Residues 100 to 101 (LS) and Arg110 contribute to the substrate site.

This sequence belongs to the type-II 3-dehydroquinase family. Homododecamer.

The catalysed reaction is 3-dehydroquinate = 3-dehydroshikimate + H2O. Its pathway is metabolic intermediate biosynthesis; chorismate biosynthesis; chorismate from D-erythrose 4-phosphate and phosphoenolpyruvate: step 3/7. Functionally, catalyzes a trans-dehydration via an enolate intermediate. The chain is 3-dehydroquinate dehydratase from Prochlorococcus marinus (strain MIT 9313).